The following is an 89-amino-acid chain: Large ribosomal subunit protein bL28 (89 aa).

It belongs to the bacterial ribosomal protein bL28 family.

The protein is Large ribosomal subunit protein bL28 of Chlamydia muridarum (strain MoPn / Nigg).